Here is a 375-residue protein sequence, read N- to C-terminus: Probable peptidoglycan glycosyltransferase FtsW (375 aa).

Residues 1-16 (MNLNFKLNLKEIERYD) lie on the Cytoplasmic side of the membrane. A helical membrane pass occupies residues 17–37 (LVILLMAVALTCFGVVMVYSA). Residues 38-49 (SSVMATKKFHDG) lie on the Periplasmic side of the membrane. The chain crosses the membrane as a helical span at residues 50-70 (FYFLKRQGIYAILGCAAMIVA). At 71–81 (MRIDYRQWREY) the chain is on the cytoplasmic side. Residues 82–102 (AVPILLGCLLLLLLVFIPGIG) traverse the membrane as a helical segment. Residues 103 to 145 (GAAKGASRWIRFPGFNLQPSELAKIALIMYMAYSLDKKQEKVK) are Periplasmic-facing. The helical transmembrane segment at 146–166 (FFSTGFAPYMVLLAILLAILL) threads the bilayer. At 167–169 (KQH) the chain is on the cytoplasmic side. Residues 170 to 190 (DLGSALTMGGVAILMLFAAGT) form a helical membrane-spanning segment. Residues 191–193 (RPR) are Periplasmic-facing. Residues 194–214 (YILGMVVLTLPFLYFLVMNVD) form a helical membrane-spanning segment. Residues 215-233 (YRRRRILAYLNPWEDPTNT) lie on the Cytoplasmic side of the membrane. A helical membrane pass occupies residues 234-254 (GFQIIQSWLAFGNGGIIGQGL). Topologically, residues 255–279 (GEGKQKMFFLPEAHTDFILSVVGEE) are periplasmic. A helical transmembrane segment spans residues 280–300 (LGLIGVIVIAAMFLMLVLRGV). The Cytoplasmic segment spans residues 301 to 312 (RVALMAQDPFGR). The chain crosses the membrane as a helical span at residues 313 to 333 (FLAFGIVTLLGIQAFVNMGVV). Residues 334–343 (TGLLPTKGLA) lie on the Periplasmic side of the membrane. A helical transmembrane segment spans residues 344–364 (LPFISYGGSSLIVTLFAVGIL). Residues 365–375 (LNVSTRMKGTP) lie on the Cytoplasmic side of the membrane.

Belongs to the SEDS family. FtsW subfamily.

It localises to the cell inner membrane. It catalyses the reaction [GlcNAc-(1-&gt;4)-Mur2Ac(oyl-L-Ala-gamma-D-Glu-L-Lys-D-Ala-D-Ala)](n)-di-trans,octa-cis-undecaprenyl diphosphate + beta-D-GlcNAc-(1-&gt;4)-Mur2Ac(oyl-L-Ala-gamma-D-Glu-L-Lys-D-Ala-D-Ala)-di-trans,octa-cis-undecaprenyl diphosphate = [GlcNAc-(1-&gt;4)-Mur2Ac(oyl-L-Ala-gamma-D-Glu-L-Lys-D-Ala-D-Ala)](n+1)-di-trans,octa-cis-undecaprenyl diphosphate + di-trans,octa-cis-undecaprenyl diphosphate + H(+). It participates in cell wall biogenesis; peptidoglycan biosynthesis. Its function is as follows. Peptidoglycan polymerase that is essential for cell division. This Geobacter metallireducens (strain ATCC 53774 / DSM 7210 / GS-15) protein is Probable peptidoglycan glycosyltransferase FtsW.